Consider the following 395-residue polypeptide: MRTWVLLLAAGSGTRLATAGLPDAKQFLPLHGAPLYWASARTMAHVAGIEGIVFVFPPHRVEEERARISALDDGSVLGLDWHVVGGGAARQDSVACGLAALPRSCEAVLVHDAARPFASPALVARVLSALHDGHAGVVPGIPLTDTVKETTDGFVANTPDRSRLVAVQTPQGFTLKALSTAHETARTAGWNVTDDAALLERCGIPVRIVAGEVVNAKITTPEDLAMLDANEPQVTVPCVGWGYDVHRYGEGRPMKLGGVLIPEGPEVVAHSDGDVLLHALADALLGCIGAGDIGLHFPDSDAAFDNANSAMLLDRVLHMTHEARLRLTHVDLTIVAQVPKLSPWRDKIRANVARLLDLPVTSVNFKATTEEGLGFTGEKRGIKAIAAVTGLRPMP.

A 2-C-methyl-D-erythritol 4-phosphate cytidylyltransferase region spans residues 1 to 237; it reads MRTWVLLLAA…DANEPQVTVP (237 aa). The 2-C-methyl-D-erythritol 2,4-cyclodiphosphate synthase stretch occupies residues 238–395; sequence CVGWGYDVHR…AAVTGLRPMP (158 aa). Positions 244 and 246 each coordinate a divalent metal cation. Residues 244–246 and 270–271 contribute to the 4-CDP-2-C-methyl-D-erythritol 2-phosphate site; these read DVH and HS. An a divalent metal cation-binding site is contributed by histidine 278. 4-CDP-2-C-methyl-D-erythritol 2-phosphate is bound by residues 292-294, 297-301, 368-371, and phenylalanine 375; these read DIG, FPDSD, and TTEE.

The protein in the N-terminal section; belongs to the IspD/TarI cytidylyltransferase family. IspD subfamily. This sequence in the C-terminal section; belongs to the IspF family. It depends on a divalent metal cation as a cofactor.

It catalyses the reaction 2-C-methyl-D-erythritol 4-phosphate + CTP + H(+) = 4-CDP-2-C-methyl-D-erythritol + diphosphate. It carries out the reaction 4-CDP-2-C-methyl-D-erythritol 2-phosphate = 2-C-methyl-D-erythritol 2,4-cyclic diphosphate + CMP. The protein operates within isoprenoid biosynthesis; isopentenyl diphosphate biosynthesis via DXP pathway; isopentenyl diphosphate from 1-deoxy-D-xylulose 5-phosphate: step 2/6. Its pathway is isoprenoid biosynthesis; isopentenyl diphosphate biosynthesis via DXP pathway; isopentenyl diphosphate from 1-deoxy-D-xylulose 5-phosphate: step 4/6. In terms of biological role, bifunctional enzyme that catalyzes the formation of 4-diphosphocytidyl-2-C-methyl-D-erythritol from CTP and 2-C-methyl-D-erythritol 4-phosphate (MEP) (IspD), and catalyzes the conversion of 4-diphosphocytidyl-2-C-methyl-D-erythritol 2-phosphate (CDP-ME2P) to 2-C-methyl-D-erythritol 2,4-cyclodiphosphate (ME-CPP) with a corresponding release of cytidine 5-monophosphate (CMP) (IspF). The chain is Bifunctional enzyme IspD/IspF from Nitratidesulfovibrio vulgaris (strain ATCC 29579 / DSM 644 / CCUG 34227 / NCIMB 8303 / VKM B-1760 / Hildenborough) (Desulfovibrio vulgaris).